A 138-amino-acid polypeptide reads, in one-letter code: ATP synthase epsilon chain (138 aa).

The protein belongs to the ATPase epsilon chain family. In terms of assembly, F-type ATPases have 2 components, CF(1) - the catalytic core - and CF(0) - the membrane proton channel. CF(1) has five subunits: alpha(3), beta(3), gamma(1), delta(1), epsilon(1). CF(0) has three main subunits: a, b and c.

The protein resides in the cell inner membrane. In terms of biological role, produces ATP from ADP in the presence of a proton gradient across the membrane. The sequence is that of ATP synthase epsilon chain from Psychrobacter cryohalolentis (strain ATCC BAA-1226 / DSM 17306 / VKM B-2378 / K5).